Consider the following 353-residue polypeptide: UDP-N-acetylglucosamine--N-acetylmuramyl-(pentapeptide) pyrophosphoryl-undecaprenol N-acetylglucosamine transferase (353 aa).

UDP-N-acetyl-alpha-D-glucosamine is bound by residues 10 to 12, Asn124, Ser183, and Gln283; that span reads TGG.

This sequence belongs to the glycosyltransferase 28 family. MurG subfamily.

Its subcellular location is the cell inner membrane. The catalysed reaction is di-trans,octa-cis-undecaprenyl diphospho-N-acetyl-alpha-D-muramoyl-L-alanyl-D-glutamyl-meso-2,6-diaminopimeloyl-D-alanyl-D-alanine + UDP-N-acetyl-alpha-D-glucosamine = di-trans,octa-cis-undecaprenyl diphospho-[N-acetyl-alpha-D-glucosaminyl-(1-&gt;4)]-N-acetyl-alpha-D-muramoyl-L-alanyl-D-glutamyl-meso-2,6-diaminopimeloyl-D-alanyl-D-alanine + UDP + H(+). It participates in cell wall biogenesis; peptidoglycan biosynthesis. In terms of biological role, cell wall formation. Catalyzes the transfer of a GlcNAc subunit on undecaprenyl-pyrophosphoryl-MurNAc-pentapeptide (lipid intermediate I) to form undecaprenyl-pyrophosphoryl-MurNAc-(pentapeptide)GlcNAc (lipid intermediate II). This Helicobacter pylori (strain HPAG1) protein is UDP-N-acetylglucosamine--N-acetylmuramyl-(pentapeptide) pyrophosphoryl-undecaprenol N-acetylglucosamine transferase.